A 397-amino-acid chain; its full sequence is Enoyl-[acyl-carrier-protein] reductase [NADH] (397 aa).

Residues 48–53 (GASTGY), 74–75 (FE), 111–112 (DA), and 139–140 (VA) contribute to the NAD(+) site. A substrate-binding site is contributed by Tyr-225. Tyr-235 (proton donor) is an active-site residue. Residues Lys-244 and 273–275 (VVT) each bind NAD(+).

The protein belongs to the TER reductase family. As to quaternary structure, monomer.

It catalyses the reaction a 2,3-saturated acyl-[ACP] + NAD(+) = a (2E)-enoyl-[ACP] + NADH + H(+). Its pathway is lipid metabolism; fatty acid biosynthesis. In terms of biological role, involved in the final reduction of the elongation cycle of fatty acid synthesis (FAS II). Catalyzes the reduction of a carbon-carbon double bond in an enoyl moiety that is covalently linked to an acyl carrier protein (ACP). The polypeptide is Enoyl-[acyl-carrier-protein] reductase [NADH] (Burkholderia mallei (strain SAVP1)).